The sequence spans 538 residues: Beta-1,4-mannosyl-glycoprotein 4-beta-N-acetylglucosaminyltransferase (538 aa).

Over 1-7 (MKMRRYK) the chain is Cytoplasmic. Residues 8-23 (LFLMFCMAGLCLISFL) traverse the membrane as a helical; Signal-anchor for type II membrane protein segment. The Lumenal portion of the chain corresponds to 24–538 (HFFKTLSYVT…VRGKLDTTEG (515 aa)). The tract at residues 121 to 151 (GTRMLEKPSPGRTEEKTKVAEGSSVRGPARR) is disordered. Residues Asn245, Asn263, and Asn401 are each glycosylated (N-linked (GlcNAc...) asparagine). The tract at residues 509–538 (PKSTVEGGRRNQGSDGRSSAVRGKLDTTEG) is disordered.

Belongs to the glycosyltransferase 17 family. In terms of assembly, interacts with MGAT4D.

The protein resides in the golgi apparatus membrane. It carries out the reaction N(4)-{beta-D-GlcNAc-(1-&gt;2)-alpha-D-Man-(1-&gt;3)-[beta-D-GlcNAc-(1-&gt;2)-alpha-D-Man-(1-&gt;6)]-beta-D-Man-(1-&gt;4)-beta-D-GlcNAc-(1-&gt;4)-beta-D-GlcNAc}-L-asparaginyl-[protein] + UDP-N-acetyl-alpha-D-glucosamine = N(4)-{beta-D-GlcNAc-(1-&gt;2)-alpha-D-Man-(1-&gt;3)-[beta-D-GlcNAc-(1-&gt;4)]-[beta-D-GlcNAc-(1-&gt;2)-alpha-D-Man-(1-&gt;6)]-beta-D-Man-(1-&gt;4)-beta-D-GlcNAc-(1-&gt;4)-beta-D-GlcNAc}-L-asparaginyl-[protein] + UDP + H(+). The protein operates within protein modification; protein glycosylation. It is involved in the regulation of the biosynthesis and biological function of glycoprotein oligosaccharides. Catalyzes the addition of N-acetylglucosamine in beta 1-4 linkage to the beta-linked mannose of the trimannosyl core of N-linked sugar chains, called bisecting N-acetylglucosamine (GlcNAc). It is one of the most important enzymes involved in the regulation of the biosynthesis of glycoprotein oligosaccharides. The addition of this bisecting GlcNAc residue alters not only the composition, but also the conformation of the N-glycan. The introduction of the bisecting GlcNAc residue results in the suppression of further processing and elongation of N-glycans, precluding the formation of beta-1,6 GlcNAc branching, catalyzed by MGAT5 since it is unable to use the bisected oligosaccharide as a substrate. Addition of bisecting N-acetylglucosamine to CDH1/E-cadherin modulates CDH1 cell membrane location. Inhibits NeuAc-alpha-2,3-Gal-beta-1,4-GlcNAc- formation which modulates sialylation levels and plays a role in cell migration regulation. In brain, addition of bisecting N-acetylglucosamine to BACE1 blocks its lysosomal targeting in response to oxidative stress and further degradation which increases its location to early endosome and the APP cleavage. The polypeptide is Beta-1,4-mannosyl-glycoprotein 4-beta-N-acetylglucosaminyltransferase (Mgat3) (Rattus norvegicus (Rat)).